The following is a 60-amino-acid chain: Cytotoxin sagitoxin (60 aa).

4 disulfide bridges follow: cysteine 3–cysteine 21, cysteine 14–cysteine 38, cysteine 42–cysteine 53, and cysteine 54–cysteine 59.

This sequence belongs to the three-finger toxin family. Short-chain subfamily. Type IA cytotoxin sub-subfamily. Monomer in solution; Homodimer and oligomer (homohexamer) in the presence of negatively charged lipids forming a pore with a size ranging between 20 and 30 Angstroms. As to expression, expressed by the venom gland.

Its subcellular location is the secreted. The protein localises to the target cell membrane. Its function is as follows. Shows cytolytic activity on many different cells by forming pore in lipid membranes. In vivo, increases heart rate or kill the animal by cardiac arrest. In addition, it binds to heparin with high affinity, interacts with Kv channel-interacting protein 1 (KCNIP1) in a calcium-independent manner, and binds to integrin alpha-V/beta-3 (ITGAV/ITGB3) with moderate affinity. The sequence is that of Cytotoxin sagitoxin from Naja sagittifera (Andaman cobra).